Here is a 552-residue protein sequence, read N- to C-terminus: uncharacterized protein (552 aa).

The 193-residue stretch at 8–200 (KLFADMIIQG…LLCVYEGFLK (193 aa)) folds into the DhaL domain.

This is an uncharacterized protein from Staphylococcus haemolyticus (strain JCSC1435).